The following is a 145-amino-acid chain: MIALIQRVTRASVTVEGEVTGEIGAGLLVLLGVEKDDDEQKANRLCERVLGYRIFSDVEGKMNLNVQQAGGSVLVVSQFTLAADTERGMRPSFSKGASPDRAEALYDYFVERCRQQEMNTQTGRFAADMQVSLVNDGPVTFWLQV.

Positions 137 to 138 (GP) match the Gly-cisPro motif, important for rejection of L-amino acids motif.

The protein belongs to the DTD family. In terms of assembly, homodimer.

The protein localises to the cytoplasm. It catalyses the reaction glycyl-tRNA(Ala) + H2O = tRNA(Ala) + glycine + H(+). The enzyme catalyses a D-aminoacyl-tRNA + H2O = a tRNA + a D-alpha-amino acid + H(+). Functionally, an aminoacyl-tRNA editing enzyme that deacylates mischarged D-aminoacyl-tRNAs. Also deacylates mischarged glycyl-tRNA(Ala), protecting cells against glycine mischarging by AlaRS. Acts via tRNA-based rather than protein-based catalysis; rejects L-amino acids rather than detecting D-amino acids in the active site. By recycling D-aminoacyl-tRNA to D-amino acids and free tRNA molecules, this enzyme counteracts the toxicity associated with the formation of D-aminoacyl-tRNA entities in vivo and helps enforce protein L-homochirality. The chain is D-aminoacyl-tRNA deacylase from Escherichia coli O7:K1 (strain IAI39 / ExPEC).